Here is a 534-residue protein sequence, read N- to C-terminus: CTP synthase (534 aa).

Residues 1-267 form an amidoligase domain region; that stretch reads MTKYIFVTGG…DQIVCDHLKL (267 aa). Serine 13 is a CTP binding site. Residue serine 13 participates in UTP binding. 14 to 19 contributes to the ATP binding site; that stretch reads SIGKGI. L-glutamine is bound at residue tyrosine 54. Aspartate 71 contributes to the ATP binding site. Mg(2+) contacts are provided by aspartate 71 and glutamate 141. CTP is bound by residues 148-150, 188-193, and lysine 224; these read DIE and KTKPTQ. UTP-binding positions include 188–193 and lysine 224; that span reads KTKPTQ. Positions 292–534 constitute a Glutamine amidotransferase type-1 domain; that stretch reads KIALVGKYVE…FVTAAVENAK (243 aa). Glycine 354 contacts L-glutamine. Cysteine 381 functions as the Nucleophile; for glutamine hydrolysis in the catalytic mechanism. L-glutamine-binding positions include 382-385, glutamate 405, and arginine 463; that span reads LGMQ. Residues histidine 508 and glutamate 510 contribute to the active site.

Belongs to the CTP synthase family. In terms of assembly, homotetramer.

It carries out the reaction UTP + L-glutamine + ATP + H2O = CTP + L-glutamate + ADP + phosphate + 2 H(+). The enzyme catalyses L-glutamine + H2O = L-glutamate + NH4(+). The catalysed reaction is UTP + NH4(+) + ATP = CTP + ADP + phosphate + 2 H(+). The protein operates within pyrimidine metabolism; CTP biosynthesis via de novo pathway; CTP from UDP: step 2/2. With respect to regulation, allosterically activated by GTP, when glutamine is the substrate; GTP has no effect on the reaction when ammonia is the substrate. The allosteric effector GTP functions by stabilizing the protein conformation that binds the tetrahedral intermediate(s) formed during glutamine hydrolysis. Inhibited by the product CTP, via allosteric rather than competitive inhibition. In terms of biological role, catalyzes the ATP-dependent amination of UTP to CTP with either L-glutamine or ammonia as the source of nitrogen. Regulates intracellular CTP levels through interactions with the four ribonucleotide triphosphates. The sequence is that of CTP synthase from Streptococcus thermophilus (strain ATCC BAA-250 / LMG 18311).